Consider the following 128-residue polypeptide: Fumarate reductase subunit C (128 aa).

Helical transmembrane passes span 31–51 (ATCI…ISLG), 67–87 (VVIL…TLYV), and 106–126 (ILKN…LVLV).

Belongs to the FrdC family. As to quaternary structure, part of an enzyme complex containing four subunits: a flavoprotein (FrdA), an iron-sulfur protein (FrdB), and two hydrophobic anchor proteins (FrdC and FrdD).

The protein localises to the cell inner membrane. In terms of biological role, anchors the catalytic components of the fumarate reductase complex to the cell membrane, binds quinones. In Haemophilus ducreyi (strain 35000HP / ATCC 700724), this protein is Fumarate reductase subunit C.